The following is a 226-amino-acid chain: Uracil-DNA glycosylase (226 aa).

Aspartate 64 serves as the catalytic Proton acceptor.

This sequence belongs to the uracil-DNA glycosylase (UDG) superfamily. UNG family.

It is found in the cytoplasm. It catalyses the reaction Hydrolyzes single-stranded DNA or mismatched double-stranded DNA and polynucleotides, releasing free uracil.. Functionally, excises uracil residues from the DNA which can arise as a result of misincorporation of dUMP residues by DNA polymerase or due to deamination of cytosine. The chain is Uracil-DNA glycosylase from Vibrio cholerae serotype O1 (strain ATCC 39541 / Classical Ogawa 395 / O395).